Here is a 102-residue protein sequence, read N- to C-terminus: Small ubiquitin-related modifier 1 (102 aa).

The Ubiquitin-like domain occupies 21–98 (DYIKLKVIGQ…IEVYQEQTGG (78 aa)). Residue Gly98 forms a Glycyl lysine isopeptide (Gly-Lys) (interchain with K-? in acceptor proteins) linkage. Positions 99 to 102 (HSTI) are excised as a propeptide.

Belongs to the ubiquitin family. SUMO subfamily. In terms of assembly, interacts with sae2, ube2i, ranbp2, pias1 and pias2. Interacts with sox9 and sox10. Covalently attached to a number of proteins. Post-translationally, cleavage of precursor form by a sentrin-specific protease is necessary for function.

The protein resides in the nucleus membrane. Its subcellular location is the nucleus speckle. It localises to the cytoplasm. The protein localises to the nucleus. It is found in the PML body. The protein resides in the cell membrane. Functionally, ubiquitin-like protein that can be covalently attached to proteins as a monomer or a lysine-linked polymer. Covalent attachment via an isopeptide bond to its substrates requires prior activation by the E1 complex sae1-sae2 and linkage to the E2 enzyme ube2i. This post-translational modification on lysine residues of proteins plays a crucial role in a number of cellular processes such as nuclear transport, DNA replication and repair, mitosis and signal transduction. Polymeric sumo1 chains are also susceptible to polyubiquitination which functions as a signal for proteasomal degradation of modified proteins. In Xenopus tropicalis (Western clawed frog), this protein is Small ubiquitin-related modifier 1 (sumo1).